We begin with the raw amino-acid sequence, 452 residues long: Ribosomal protein uS12 methylthiotransferase RimO (452 aa).

The MTTase N-terminal domain maps to Leu3 to Asp122. 6 residues coordinate [4Fe-4S] cluster: Cys12, Cys48, Cys85, Cys162, Cys166, and Cys169. Residues Leu148–Glu392 form the Radical SAM core domain. In terms of domain architecture, TRAM spans Gln395–Glu452.

It belongs to the methylthiotransferase family. RimO subfamily. [4Fe-4S] cluster serves as cofactor.

The protein resides in the cytoplasm. It catalyses the reaction L-aspartate(89)-[ribosomal protein uS12]-hydrogen + (sulfur carrier)-SH + AH2 + 2 S-adenosyl-L-methionine = 3-methylsulfanyl-L-aspartate(89)-[ribosomal protein uS12]-hydrogen + (sulfur carrier)-H + 5'-deoxyadenosine + L-methionine + A + S-adenosyl-L-homocysteine + 2 H(+). Its function is as follows. Catalyzes the methylthiolation of an aspartic acid residue of ribosomal protein uS12. In Akkermansia muciniphila (strain ATCC BAA-835 / DSM 22959 / JCM 33894 / BCRC 81048 / CCUG 64013 / CIP 107961 / Muc), this protein is Ribosomal protein uS12 methylthiotransferase RimO.